A 118-amino-acid polypeptide reads, in one-letter code: Small ribosomal subunit protein uS13 (118 aa).

Positions Gly94–Lys118 are disordered.

The protein belongs to the universal ribosomal protein uS13 family. As to quaternary structure, part of the 30S ribosomal subunit. Forms a loose heterodimer with protein S19. Forms two bridges to the 50S subunit in the 70S ribosome.

In terms of biological role, located at the top of the head of the 30S subunit, it contacts several helices of the 16S rRNA. In the 70S ribosome it contacts the 23S rRNA (bridge B1a) and protein L5 of the 50S subunit (bridge B1b), connecting the 2 subunits; these bridges are implicated in subunit movement. Contacts the tRNAs in the A and P-sites. The chain is Small ribosomal subunit protein uS13 from Klebsiella pneumoniae (strain 342).